The primary structure comprises 65 residues: Weak neurotoxin 8 (65 aa).

5 disulfide bridges follow: cysteine 3–cysteine 24, cysteine 6–cysteine 11, cysteine 17–cysteine 42, cysteine 46–cysteine 57, and cysteine 58–cysteine 63.

This sequence belongs to the three-finger toxin family. Ancestral subfamily. Orphan group II sub-subfamily. Expressed by the venom gland.

The protein localises to the secreted. Its function is as follows. Binds with low affinity to muscular (alpha-1-beta-1-delta-epsilon/CHRNA1-CHRNB1-CHRND-CHRNE) and very low affinity to neuronal (alpha-7/CHRNA7) nicotinic acetylcholine receptor (nAChR). The chain is Weak neurotoxin 8 from Naja naja (Indian cobra).